Consider the following 84-residue polypeptide: ATP synthase subunit c (84 aa).

2 consecutive transmembrane segments (helical) span residues I13 to I33 and F56 to F76.

Belongs to the ATPase C chain family. As to quaternary structure, F-type ATPases have 2 components, F(1) - the catalytic core - and F(0) - the membrane proton channel. F(1) has five subunits: alpha(3), beta(3), gamma(1), delta(1), epsilon(1). F(0) has three main subunits: a(1), b(2) and c(10-14). The alpha and beta chains form an alternating ring which encloses part of the gamma chain. F(1) is attached to F(0) by a central stalk formed by the gamma and epsilon chains, while a peripheral stalk is formed by the delta and b chains.

Its subcellular location is the cell inner membrane. F(1)F(0) ATP synthase produces ATP from ADP in the presence of a proton or sodium gradient. F-type ATPases consist of two structural domains, F(1) containing the extramembraneous catalytic core and F(0) containing the membrane proton channel, linked together by a central stalk and a peripheral stalk. During catalysis, ATP synthesis in the catalytic domain of F(1) is coupled via a rotary mechanism of the central stalk subunits to proton translocation. In terms of biological role, key component of the F(0) channel; it plays a direct role in translocation across the membrane. A homomeric c-ring of between 10-14 subunits forms the central stalk rotor element with the F(1) delta and epsilon subunits. The chain is ATP synthase subunit c from Acidithiobacillus ferrooxidans (strain ATCC 23270 / DSM 14882 / CIP 104768 / NCIMB 8455) (Ferrobacillus ferrooxidans (strain ATCC 23270)).